The primary structure comprises 96 residues: Iron-sulfur cluster assembly protein CyaY (96 aa).

This sequence belongs to the frataxin family.

In terms of biological role, involved in iron-sulfur (Fe-S) cluster assembly. May act as a regulator of Fe-S biogenesis. The sequence is that of Iron-sulfur cluster assembly protein CyaY from Rickettsia bellii (strain RML369-C).